The chain runs to 362 residues: Histidinol-phosphate aminotransferase (362 aa).

An N6-(pyridoxal phosphate)lysine modification is found at Lys-218.

It belongs to the class-II pyridoxal-phosphate-dependent aminotransferase family. Histidinol-phosphate aminotransferase subfamily. As to quaternary structure, homodimer. Pyridoxal 5'-phosphate is required as a cofactor.

It carries out the reaction L-histidinol phosphate + 2-oxoglutarate = 3-(imidazol-4-yl)-2-oxopropyl phosphate + L-glutamate. It participates in amino-acid biosynthesis; L-histidine biosynthesis; L-histidine from 5-phospho-alpha-D-ribose 1-diphosphate: step 7/9. The polypeptide is Histidinol-phosphate aminotransferase (Xanthomonas campestris pv. campestris (strain 8004)).